The primary structure comprises 227 residues: 2,3-bisphosphoglycerate-dependent phosphoglycerate mutase (227 aa).

Residues 7–14, 20–21, Arg-59, 86–89, Lys-97, 113–114, and 182–183 each bind substrate; these read RHGFSEWN, TG, ERHY, RR, and GN. Residue His-8 is the Tele-phosphohistidine intermediate of the active site. Glu-86 (proton donor/acceptor) is an active-site residue.

Belongs to the phosphoglycerate mutase family. BPG-dependent PGAM subfamily. In terms of assembly, homodimer.

It carries out the reaction (2R)-2-phosphoglycerate = (2R)-3-phosphoglycerate. It participates in carbohydrate degradation; glycolysis; pyruvate from D-glyceraldehyde 3-phosphate: step 3/5. In terms of biological role, catalyzes the interconversion of 2-phosphoglycerate and 3-phosphoglycerate. The chain is 2,3-bisphosphoglycerate-dependent phosphoglycerate mutase from Haemophilus ducreyi (strain 35000HP / ATCC 700724).